The chain runs to 348 residues: Lysophosphatidic acid receptor 2 (348 aa).

Residues 1-30 (MGHCYYNETIGFFYNNSGKELSSHWRPKDV) lie on the Extracellular side of the membrane. Asn-7 and Asn-15 each carry an N-linked (GlcNAc...) asparagine glycan. A helical membrane pass occupies residues 31-51 (VVVALGLTVSVLVLLTNLLVI). Over 52 to 66 (AAIASNRRFHQPIYY) the chain is Cytoplasmic. Residues 67–87 (LLGNLAAADLFAGVAYLFLMF) traverse the membrane as a helical segment. At 88–104 (HTGPRTARLSLEGWFLR) the chain is on the extracellular side. Residues 105–124 (QGLLDTSLTASVATLLAIAV) form a helical membrane-spanning segment. The Cytoplasmic portion of the chain corresponds to 125–143 (ERRRSVMAVQLHSRLPRGR). A helical membrane pass occupies residues 144 to 164 (VVMLIVGVWVAALGLGLLPAH). Residues 165–185 (SWHCLCALDRCSRMAPLLSRS) are Extracellular-facing. A helical membrane pass occupies residues 186 to 206 (YLAVWALSSLLVFLLMVAVYT). The Cytoplasmic segment spans residues 207–239 (RIFFYVRRRVQRMAEHVSCHPRYRETTLSLVKT). Residues 240-260 (VVIILGAFVVCWTPGQVVLLL) traverse the membrane as a helical segment. Residues 261-276 (DGLGCKSCNVLAVEKY) lie on the Extracellular side of the membrane. The helical transmembrane segment at 277 to 294 (FLLLAEANSLVNAAVYSC) threads the bilayer. At 295–348 (RDAEMRRTFRRLLCCACLRRSTRESAHYTSSAQGGASTRIMLPENGHPLMDSTL) the chain is on the cytoplasmic side. The S-palmitoyl cysteine moiety is linked to residue Cys-308. The PDZ-binding signature appears at 345-348 (DSTL).

Belongs to the G-protein coupled receptor 1 family. As to quaternary structure, interacts with SLC9A3R2/NHERF2, MAGI3 and PLCB3. Interacts with RALA and GRK2.

It localises to the cell surface. It is found in the cell membrane. Receptor for lysophosphatidic acid (LPA), a mediator of diverse cellular activities. Seems to be coupled to the G(i)/G(o), G(12)/G(13), and G(q) families of heteromeric G proteins. Plays a key role in phospholipase C-beta (PLC-beta) signaling pathway. Stimulates phospholipase C (PLC) activity in a manner that is independent of RALA activation. The protein is Lysophosphatidic acid receptor 2 of Macaca fascicularis (Crab-eating macaque).